Here is a 245-residue protein sequence, read N- to C-terminus: tRNA (guanine-N(1)-)-methyltransferase (245 aa).

Residues G113 and 133 to 138 (IGDYVL) contribute to the S-adenosyl-L-methionine site.

Belongs to the RNA methyltransferase TrmD family. As to quaternary structure, homodimer.

The protein resides in the cytoplasm. The catalysed reaction is guanosine(37) in tRNA + S-adenosyl-L-methionine = N(1)-methylguanosine(37) in tRNA + S-adenosyl-L-homocysteine + H(+). Specifically methylates guanosine-37 in various tRNAs. This chain is tRNA (guanine-N(1)-)-methyltransferase, found in Histophilus somni (strain 129Pt) (Haemophilus somnus).